Here is a 275-residue protein sequence, read N- to C-terminus: AQSVPYGISQIKAPALHSQGYTGSNVKVAVIDSGIDSSHPDLNVRGGASFVPSETNPYQDGSSHGTHVAGTIAALNNSIGVLGVAPSSALYAVKVLDSTGSGQYSWIINGIEWAISNNMDVINMSLGGPTGSTALKTVVDKAVSSGIVVAAAAGNEGSSGSTSTVGYPAKYPSTIAVGAVNSANQRASFSSAGSELDVMAPGVSIQSTLPGGTYGAYNGTSMATPHVAGAAALILSKHPTWTNAQVRDRLESTATYLGSSFYYGKGLINVQAAAQ.

A Ca(2+)-binding site is contributed by Q2. One can recognise a Peptidase S8 domain in the interval P5–A274. The active-site Charge relay system is the D32. D41 lines the Ca(2+) pocket. The active-site Charge relay system is H64. The Ca(2+) site is built by L75, N77, I79, V81, A169, Y171, and T174. S221 functions as the Charge relay system in the catalytic mechanism.

This sequence belongs to the peptidase S8 family. The cofactor is Ca(2+).

Its subcellular location is the secreted. The enzyme catalyses Hydrolysis of proteins with broad specificity for peptide bonds, and a preference for a large uncharged residue in P1. Hydrolyzes peptide amides.. Subtilisin is an extracellular alkaline serine protease, it catalyzes the hydrolysis of proteins and peptide amides. The protein is Subtilisin (apr) of Bacillus pumilus (Bacillus mesentericus).